The primary structure comprises 172 residues: C-phycocyanin beta chain (172 aa).

At asparagine 72 the chain carries N4-methylasparagine. (2R,3E)-phycocyanobilin contacts are provided by cysteine 82 and cysteine 153.

It belongs to the phycobiliprotein family. As to quaternary structure, heterodimer of an alpha and a beta subunit, which further assembles into trimers and the trimers into hexamers. The basic functional unit of phycobiliproteins is a ring-shaped hexamer formed from two back-to-back trimers contacting via the alpha chain subunits. The trimers are composed of alpha/beta subunit heterodimers arranged around a three-fold axis of symmetry. The phycoerythrins also contain a gamma subunit which is located in the center of the hexamer. In terms of processing, contains two covalently linked bilin chromophores.

It localises to the plastid. It is found in the chloroplast thylakoid membrane. Light-harvesting photosynthetic bile pigment-protein from the phycobiliprotein complex (phycobilisome, PBS). Phycocyanin is the major phycobiliprotein in the PBS rod. The protein is C-phycocyanin beta chain (cpcB) of Pyropia haitanensis (Red seaweed).